The chain runs to 311 residues: tRNA dimethylallyltransferase (311 aa).

An ATP-binding site is contributed by glycine 13–threonine 20. Substrate is bound at residue threonine 15–threonine 20. 2 interaction with substrate tRNA regions span residues aspartate 38–glutamine 41 and glutamine 166–arginine 170.

The protein belongs to the IPP transferase family. Monomer. Mg(2+) is required as a cofactor.

It catalyses the reaction adenosine(37) in tRNA + dimethylallyl diphosphate = N(6)-dimethylallyladenosine(37) in tRNA + diphosphate. Its function is as follows. Catalyzes the transfer of a dimethylallyl group onto the adenine at position 37 in tRNAs that read codons beginning with uridine, leading to the formation of N6-(dimethylallyl)adenosine (i(6)A). The chain is tRNA dimethylallyltransferase from Staphylococcus aureus (strain MRSA252).